The chain runs to 320 residues: Arabinan endo-1,5-alpha-L-arabinosidase C (320 aa).

The first 15 residues, 1 to 15 (MKLALSLFLLSGSLA), serve as a signal peptide directing secretion. Asp31 (proton acceptor) is an active-site residue. N-linked (GlcNAc...) asparagine glycosylation is found at Asn126 and Asn190. Glu198 (proton donor) is an active-site residue.

Belongs to the glycosyl hydrolase 43 family.

It localises to the secreted. The enzyme catalyses Endohydrolysis of (1-&gt;5)-alpha-arabinofuranosidic linkages in (1-&gt;5)-arabinans.. It participates in glycan metabolism; L-arabinan degradation. Endo-1,5-alpha-L-arabinanase involved in degradation of pectin. Its preferred substrate is linear 1,5-alpha-L-arabinan. The protein is Arabinan endo-1,5-alpha-L-arabinosidase C (abnC) of Emericella nidulans (strain FGSC A4 / ATCC 38163 / CBS 112.46 / NRRL 194 / M139) (Aspergillus nidulans).